A 255-amino-acid polypeptide reads, in one-letter code: tRNA pseudouridine synthase B (255 aa).

D58 acts as the Nucleophile in catalysis.

Belongs to the pseudouridine synthase TruB family. Type 1 subfamily.

It carries out the reaction uridine(55) in tRNA = pseudouridine(55) in tRNA. Functionally, responsible for synthesis of pseudouridine from uracil-55 in the psi GC loop of transfer RNAs. The chain is tRNA pseudouridine synthase B from Chlorobium chlorochromatii (strain CaD3).